The following is a 674-amino-acid chain: 1,4-alpha-glucan branching enzyme GlgB 1 (674 aa).

The Nucleophile role is filled by Asp336. Glu389 acts as the Proton donor in catalysis.

It belongs to the glycosyl hydrolase 13 family. GlgB subfamily. Monomer.

It catalyses the reaction Transfers a segment of a (1-&gt;4)-alpha-D-glucan chain to a primary hydroxy group in a similar glucan chain.. The protein operates within glycan biosynthesis; glycogen biosynthesis. In terms of biological role, catalyzes the formation of the alpha-1,6-glucosidic linkages in glycogen by scission of a 1,4-alpha-linked oligosaccharide from growing alpha-1,4-glucan chains and the subsequent attachment of the oligosaccharide to the alpha-1,6 position. This Clostridium perfringens (strain 13 / Type A) protein is 1,4-alpha-glucan branching enzyme GlgB 1 (glgB1).